A 268-amino-acid chain; its full sequence is NAC transcription factor 29 (268 aa).

Residues 9–161 enclose the NAC domain; it reads LPPGFRFHPT…EWVLCRIYKK (153 aa). A DNA-binding region spans residues 106–167; that stretch reads VGVKKALVFY…IYKKRGASKL (62 aa).

Expressed in senescing leaves, petals and sepals.

The protein localises to the nucleus. Functionally, transcription activator that binds to, and transactivates the promoter of the abscisic aldehyde oxidase AAO3. Promotes chlorophyll degradation in leaves by enhancing transcription of AAO3, which leads to increased levels of the senescence-inducing hormone abscisic acid (ABA). Involved in the control of dehydration in senescing leaves. Binds to the DNA sequence 5'-CACGTAAGT-3' of SAG113 promoter. SAG113 acts as a negative regulator of ABA signaling for stomatal closure in leaves, and controls water loss during leaf senescence. Transcription factor of the NAC family involved in senescence. May function in the transition between active cell division and cell expansion. Required for normal seed development and morphology. This is NAC transcription factor 29 (NAC029) from Arabidopsis thaliana (Mouse-ear cress).